The primary structure comprises 305 residues: Fructose-bisphosphate aldolase (305 aa).

Residue Ser-49 coordinates D-glyceraldehyde 3-phosphate. Asp-80 functions as the Proton donor in the catalytic mechanism. Residues His-81, Asp-102, Glu-132, and His-178 each contribute to the Zn(2+) site. Gly-179 serves as a coordination point for dihydroxyacetone phosphate. A Zn(2+)-binding site is contributed by His-208. Dihydroxyacetone phosphate-binding positions include 209–211 (GAS) and 251–254 (NTDT).

It belongs to the class II fructose-bisphosphate aldolase family. As to quaternary structure, homotetramer. It depends on Zn(2+) as a cofactor.

It carries out the reaction beta-D-fructose 1,6-bisphosphate = D-glyceraldehyde 3-phosphate + dihydroxyacetone phosphate. It participates in carbohydrate degradation; glycolysis; D-glyceraldehyde 3-phosphate and glycerone phosphate from D-glucose: step 4/4. In terms of biological role, catalyzes the aldol condensation of dihydroxyacetone phosphate (DHAP or glycerone-phosphate) with glyceraldehyde 3-phosphate (G3P) to form fructose 1,6-bisphosphate (FBP) in gluconeogenesis and the reverse reaction in glycolysis. This Thermus caldophilus protein is Fructose-bisphosphate aldolase.